A 543-amino-acid polypeptide reads, in one-letter code: Ribonuclease Y (543 aa).

The chain crosses the membrane as a helical span at residues 4-24 (IIMIPVATAIVSLLVGTVTGY). The region spanning 233–296 (TVSVVDLPNE…EIAKRAMERL (64 aa)) is the KH domain. The region spanning 359 to 452 (VLSHSIEVGK…VVAADTISSA (94 aa)) is the HD domain.

Belongs to the RNase Y family.

The protein resides in the cell membrane. Its function is as follows. Endoribonuclease that initiates mRNA decay. This Lactobacillus acidophilus (strain ATCC 700396 / NCK56 / N2 / NCFM) protein is Ribonuclease Y.